The following is a 569-amino-acid chain: 3-(3-hydroxy-phenyl)propionate/3-hydroxycinnamic acid hydroxylase (569 aa).

FAD is bound by residues 12 to 41 (DVVV…VVDE) and 277 to 287 (FRKGRLMLAGD).

The protein belongs to the PheA/TfdB FAD monooxygenase family. FAD serves as cofactor.

It carries out the reaction 3-(3-hydroxyphenyl)propanoate + NADH + O2 + H(+) = 3-(2,3-dihydroxyphenyl)propanoate + NAD(+) + H2O. It catalyses the reaction (2E)-3-(3-hydroxyphenyl)prop-2-enoate + NADH + O2 + H(+) = (2E)-3-(2,3-dihydroxyphenyl)prop-2-enoate + NAD(+) + H2O. It functions in the pathway aromatic compound metabolism; 3-phenylpropanoate degradation. Catalyzes the insertion of one atom of molecular oxygen into position 2 of the phenyl ring of 3-(3-hydroxyphenyl)propionate (3-HPP) and hydroxycinnamic acid (3HCI). In Mycolicibacterium vanbaalenii (strain DSM 7251 / JCM 13017 / BCRC 16820 / KCTC 9966 / NRRL B-24157 / PYR-1) (Mycobacterium vanbaalenii), this protein is 3-(3-hydroxy-phenyl)propionate/3-hydroxycinnamic acid hydroxylase.